Consider the following 166-residue polypeptide: Phospholipase A2 myotoxin inhibitor protein (166 aa).

The first 19 residues, 1–19 (MRLILLSGLLLLGTFLANG), serve as a signal peptide directing secretion. The region spanning 46–161 (LKYAFLTVHK…CDDNLLVVCE (116 aa)) is the C-type lectin domain. 2 disulfides stabilise this stretch: Cys-83–Cys-160 and Cys-138–Cys-152. N-linked (GlcNAc...) asparagine glycosylation is present at Asn-122.

This sequence belongs to the alpha-type phospholipase A2 inhibitor family. As to quaternary structure, oligomer. Homotrimer; non-covalently linked. In terms of processing, glycosylated. The glycosylation has no role in the association of this PLI and PA2 enzyme. In terms of tissue distribution, expressed by the liver.

The protein resides in the secreted. In terms of biological role, this phospholipase A2 inhibitor binds directly phospholipase A2 in the presence or absence of calcium. Has anti-enzymatic, anti-myotoxic, anti-edema inducing, anti-cytotoxic, anti-bactericidal, and anti-lethal properties against basic and acidic phospholipases A2 from Bothrops venoms. The sequence is that of Phospholipase A2 myotoxin inhibitor protein from Bothrops moojeni (Lance-headed viper).